The sequence spans 370 residues: Holliday junction branch migration complex subunit RuvB (370 aa).

The large ATPase domain (RuvB-L) stretch occupies residues 1–182 (MDERMMTSAK…FGVIHRLEYY (182 aa)). Residues Leu21, Arg22, Gly63, Lys66, Thr67, Thr68, 129–131 (EDF), Arg172, Tyr182, and Arg219 each bind ATP. A Mg(2+)-binding site is contributed by Thr67. A small ATPAse domain (RuvB-S) region spans residues 183–253 (RPDELEFIIL…VAREALRRLE (71 aa)). The interval 256–370 (PRGLDTTDQR…AEQAALSFDE (115 aa)) is head domain (RuvB-H). Residues Arg311 and Arg316 each contribute to the DNA site.

The protein belongs to the RuvB family. Homohexamer. Forms an RuvA(8)-RuvB(12)-Holliday junction (HJ) complex. HJ DNA is sandwiched between 2 RuvA tetramers; dsDNA enters through RuvA and exits via RuvB. An RuvB hexamer assembles on each DNA strand where it exits the tetramer. Each RuvB hexamer is contacted by two RuvA subunits (via domain III) on 2 adjacent RuvB subunits; this complex drives branch migration. In the full resolvosome a probable DNA-RuvA(4)-RuvB(12)-RuvC(2) complex forms which resolves the HJ.

It localises to the cytoplasm. The enzyme catalyses ATP + H2O = ADP + phosphate + H(+). Functionally, the RuvA-RuvB-RuvC complex processes Holliday junction (HJ) DNA during genetic recombination and DNA repair, while the RuvA-RuvB complex plays an important role in the rescue of blocked DNA replication forks via replication fork reversal (RFR). RuvA specifically binds to HJ cruciform DNA, conferring on it an open structure. The RuvB hexamer acts as an ATP-dependent pump, pulling dsDNA into and through the RuvAB complex. RuvB forms 2 homohexamers on either side of HJ DNA bound by 1 or 2 RuvA tetramers; 4 subunits per hexamer contact DNA at a time. Coordinated motions by a converter formed by DNA-disengaged RuvB subunits stimulates ATP hydrolysis and nucleotide exchange. Immobilization of the converter enables RuvB to convert the ATP-contained energy into a lever motion, pulling 2 nucleotides of DNA out of the RuvA tetramer per ATP hydrolyzed, thus driving DNA branch migration. The RuvB motors rotate together with the DNA substrate, which together with the progressing nucleotide cycle form the mechanistic basis for DNA recombination by continuous HJ branch migration. Branch migration allows RuvC to scan DNA until it finds its consensus sequence, where it cleaves and resolves cruciform DNA. This chain is Holliday junction branch migration complex subunit RuvB, found in Heliobacterium modesticaldum (strain ATCC 51547 / Ice1).